The following is a 292-amino-acid chain: 4-diphosphocytidyl-2-C-methyl-D-erythritol kinase (292 aa).

Lys10 is an active-site residue. 100 to 110 (PIGSGLGGGSS) provides a ligand contact to ATP. Asp142 is an active-site residue.

It belongs to the GHMP kinase family. IspE subfamily. Homodimer.

It catalyses the reaction 4-CDP-2-C-methyl-D-erythritol + ATP = 4-CDP-2-C-methyl-D-erythritol 2-phosphate + ADP + H(+). The protein operates within isoprenoid biosynthesis; isopentenyl diphosphate biosynthesis via DXP pathway; isopentenyl diphosphate from 1-deoxy-D-xylulose 5-phosphate: step 3/6. In terms of biological role, catalyzes the phosphorylation of the position 2 hydroxy group of 4-diphosphocytidyl-2C-methyl-D-erythritol. The protein is 4-diphosphocytidyl-2-C-methyl-D-erythritol kinase of Buchnera aphidicola subsp. Schizaphis graminum (strain Sg).